A 536-amino-acid polypeptide reads, in one-letter code: Membrane protein insertase YidC (536 aa).

Helical transmembrane passes span 7 to 27 (FFIF…QSQS), 338 to 358 (LLST…LITF), 419 to 439 (LPVF…IGSV), 453 to 473 (LSDQ…MFFI), and 494 to 514 (PFIF…YYIV).

Belongs to the OXA1/ALB3/YidC family. Type 1 subfamily. Interacts with the Sec translocase complex via SecD. Specifically interacts with transmembrane segments of nascent integral membrane proteins during membrane integration.

Its subcellular location is the cell membrane. Required for the insertion and/or proper folding and/or complex formation of integral membrane proteins into the membrane. Involved in integration of membrane proteins that insert both dependently and independently of the Sec translocase complex, as well as at least some lipoproteins. Aids folding of multispanning membrane proteins. The sequence is that of Membrane protein insertase YidC from Buchnera aphidicola subsp. Schizaphis graminum (strain Sg).